A 341-amino-acid chain; its full sequence is Phosphoribosylformylglycinamidine cyclo-ligase (341 aa).

This sequence belongs to the AIR synthase family.

It is found in the cytoplasm. The catalysed reaction is 2-formamido-N(1)-(5-O-phospho-beta-D-ribosyl)acetamidine + ATP = 5-amino-1-(5-phospho-beta-D-ribosyl)imidazole + ADP + phosphate + H(+). It participates in purine metabolism; IMP biosynthesis via de novo pathway; 5-amino-1-(5-phospho-D-ribosyl)imidazole from N(2)-formyl-N(1)-(5-phospho-D-ribosyl)glycinamide: step 2/2. The sequence is that of Phosphoribosylformylglycinamidine cyclo-ligase from Caldicellulosiruptor bescii (strain ATCC BAA-1888 / DSM 6725 / KCTC 15123 / Z-1320) (Anaerocellum thermophilum).